Here is a 432-residue protein sequence, read N- to C-terminus: MYQIFFFFLPLLHSYASAQTPPPFRNGDLVANFEPSLAVVTGVLAIMFALTFVLLVYAKCCHIDLRSGSGDRRRHDRRLRQGIFFNRSTASSDRFSGLDKTAIESLPLFRFSALKGSKQGLDCSVCLSKFESVEILRLLPKCRHAFHIGCIDQWLEQHATCPLCRDRVSMEEDSSVLTNGNSFRFLNQSEIREDSSLELYIEREEEEERIHREELSGSSRFSIGESFRKILKLGNKEKTLLDEHVNDKDEKKLMHKFNHRIVVSDVVFKNRWSNVSSSDLMFLNSEMVNSISSERFSSLDHVKRGDEEDQIGILRIKEEMEAKRMLENKLTSMTTMFSSENGDSGSKSRSVMIEPGRRSVSDITAVPRLSISIHGDCSGSAAETASALQNGGNETEERRRRLWLPIARKTAQWFANREKRSQINTTHQHFDV.

Positions 1 to 18 (MYQIFFFFLPLLHSYASA) are cleaved as a signal peptide. A helical transmembrane segment spans residues 37–57 (LAVVTGVLAIMFALTFVLLVY). An RING-type; atypical zinc finger spans residues 123-165 (CSVCLSKFESVEILRLLPKCRHAFHIGCIDQWLEQHATCPLCR).

The protein belongs to the RING-type zinc finger family. ATL subfamily.

It is found in the membrane. The catalysed reaction is S-ubiquitinyl-[E2 ubiquitin-conjugating enzyme]-L-cysteine + [acceptor protein]-L-lysine = [E2 ubiquitin-conjugating enzyme]-L-cysteine + N(6)-ubiquitinyl-[acceptor protein]-L-lysine.. The protein operates within protein modification; protein ubiquitination. E3 ubiquitin-protein ligase able to catalyze polyubiquitination with ubiquitin-conjugating enzyme E2 UBC8 in vitro. The chain is E3 ubiquitin-protein ligase ATL42 (ATL42) from Arabidopsis thaliana (Mouse-ear cress).